The following is a 375-amino-acid chain: Succinyl-diaminopimelate desuccinylase (375 aa).

Zn(2+) is bound at residue histidine 66. Residue aspartate 68 is part of the active site. Aspartate 99 contacts Zn(2+). Glutamate 133 serves as the catalytic Proton acceptor. Zn(2+) is bound by residues glutamate 134, glutamate 162, and histidine 348.

Belongs to the peptidase M20A family. DapE subfamily. As to quaternary structure, homodimer. Zn(2+) is required as a cofactor. It depends on Co(2+) as a cofactor.

It catalyses the reaction N-succinyl-(2S,6S)-2,6-diaminopimelate + H2O = (2S,6S)-2,6-diaminopimelate + succinate. It functions in the pathway amino-acid biosynthesis; L-lysine biosynthesis via DAP pathway; LL-2,6-diaminopimelate from (S)-tetrahydrodipicolinate (succinylase route): step 3/3. Its function is as follows. Catalyzes the hydrolysis of N-succinyl-L,L-diaminopimelic acid (SDAP), forming succinate and LL-2,6-diaminopimelate (DAP), an intermediate involved in the bacterial biosynthesis of lysine and meso-diaminopimelic acid, an essential component of bacterial cell walls. The sequence is that of Succinyl-diaminopimelate desuccinylase from Teredinibacter turnerae (strain ATCC 39867 / T7901).